Consider the following 353-residue polypeptide: UPF0283 membrane protein YcjF (353 aa).

3 helical membrane-spanning segments follow: residues 70–90, 100–120, and 213–233; these read MVMG…VQWT, VALG…GSVV, and ESTL…FIAW.

It belongs to the UPF0283 family.

The protein localises to the cell inner membrane. The protein is UPF0283 membrane protein YcjF of Escherichia fergusonii (strain ATCC 35469 / DSM 13698 / CCUG 18766 / IAM 14443 / JCM 21226 / LMG 7866 / NBRC 102419 / NCTC 12128 / CDC 0568-73).